The chain runs to 271 residues: Short chain dehydrogenase virK (271 aa).

Positions 13, 59, 87, 168, 172, 201, and 203 each coordinate NADP(+). Tyr-168 serves as the catalytic Proton donor. Lys-172 functions as the Lowers pKa of active site Tyr in the catalytic mechanism.

Belongs to the short-chain dehydrogenases/reductases (SDR) family.

It functions in the pathway secondary metabolite biosynthesis. Its function is as follows. Short chain dehydrogenase; part of the gene cluster that mediates the biosynthesis of virensols and trichoxide, fungal natural products that contain or are derived from a salicylaldehyde core. The pathway begins with the synthesis of the reduced chain in virensol C by the highly reducing polyketide synthase virA via condensation of one acetate and 8 malonate units. VirA has interesting programming rules since the first 2 ketides are fully reduced, the 3 following ketides undergo beta-dehydration, and the last 3 ketides are only reduced to beta-hydroxys to yield the trihydroxy portion. The production of aldehyde virensol C by virA alone is surprising, since virA does not contain a reductase (R) domain that is typically associated with reductive product release in HRPKS. The cupin-domain enzyme virC is involved in enhancing virA product turnover. The short-chain dehydrogenase virB then oxidizes the C-7 alcohol of virensol C to a ketone, yielding virensol D. Virensol D is further transformed to salicylaldehyde 5-deoxyaurocitrin by the short-chain dehydrogenase virD. VirD catalyzes the dehydrogenation of C-3 to form the beta-ketone aldehyde, which is followed by the generation of the nucleophilic C-2 that is required for the intramolecular aldol condensation between C-2 and C-7, itself followed by dehydration and aromatization which leads to salicylaldehyde 5-deoxyaurocitrin. While the dehydrogenation of virensol D is definitely catalyzed by virD, the aldol condensation and dehydration may be uncatalyzed or assisted by virD. The short chain dehydrogenase virG then converts salicylaldehyde 5-deoxyaurocitrin into virensol B which is further hydroxylated by the cytochrome P450 monooxygenase virE to yield the hydroquinone virensol A. VirI then may oxidize virensol A to form the quinone, while virH performs the epoxidation. Finally, the two remaining short-chain dehydrogenases, virK and virL, are probably responsible for reducing the ketones to the corresponding alcohols to furnish the epoxycyclohexanol structure in trichoxide. This chain is Short chain dehydrogenase virK, found in Hypocrea virens (strain Gv29-8 / FGSC 10586) (Gliocladium virens).